The sequence spans 349 residues: Flap endonuclease 1 (349 aa).

Residues 1 to 102 (MGVTELGKLI…AEIEARRRVK (102 aa)) are N-domain. The Mg(2+) site is built by D31, D84, E156, E158, D177, D179, and D239. Residues 120-261 (DVAKYMKRVI…KALKLVLEFG (142 aa)) are I-domain.

It belongs to the XPG/RAD2 endonuclease family. FEN1 subfamily. As to quaternary structure, interacts with PCNA. PCNA stimulates the nuclease activity without altering cleavage specificity. Mg(2+) serves as cofactor.

Functionally, structure-specific nuclease with 5'-flap endonuclease and 5'-3' exonuclease activities involved in DNA replication and repair. During DNA replication, cleaves the 5'-overhanging flap structure that is generated by displacement synthesis when DNA polymerase encounters the 5'-end of a downstream Okazaki fragment. Binds the unpaired 3'-DNA end and kinks the DNA to facilitate 5' cleavage specificity. Cleaves one nucleotide into the double-stranded DNA from the junction in flap DNA, leaving a nick for ligation. Also involved in the base excision repair (BER) pathway. Acts as a genome stabilization factor that prevents flaps from equilibrating into structures that lead to duplications and deletions. Also possesses 5'-3' exonuclease activity on nicked or gapped double-stranded DNA. This is Flap endonuclease 1 from Pyrobaculum neutrophilum (strain DSM 2338 / JCM 9278 / NBRC 100436 / V24Sta) (Thermoproteus neutrophilus).